A 660-amino-acid chain; its full sequence is Bifunctional polymyxin resistance protein ArnA (660 aa).

Residues 1–304 (MKTVVFAYHD…TLGLVQGSRL (304 aa)) form a formyltransferase ArnAFT region. Residue 86 to 88 (HLI) coordinates (6R)-10-formyltetrahydrofolate. Catalysis depends on H104, which acts as the Proton donor; for formyltransferase activity. (6R)-10-formyltetrahydrofolate is bound by residues R114 and 136–140 (VKRAD). The dehydrogenase ArnADH stretch occupies residues 314–660 (RRTRVLILGV…RTVDLTDKPS (347 aa)). Residues D347 and 368–369 (DI) contribute to the NAD(+) site. UDP-alpha-D-glucuronate contacts are provided by residues A393, Y398, and 432–433 (TS). Catalysis depends on E434, which acts as the Proton acceptor; for decarboxylase activity. UDP-alpha-D-glucuronate contacts are provided by residues R460, N492, 526–535 (KLIDGGKQKR), and Y613. The active-site Proton donor; for decarboxylase activity is R619.

The protein in the N-terminal section; belongs to the Fmt family. UDP-L-Ara4N formyltransferase subfamily. It in the C-terminal section; belongs to the NAD(P)-dependent epimerase/dehydratase family. UDP-glucuronic acid decarboxylase subfamily. As to quaternary structure, homohexamer, formed by a dimer of trimers.

It catalyses the reaction UDP-alpha-D-glucuronate + NAD(+) = UDP-beta-L-threo-pentopyranos-4-ulose + CO2 + NADH. The catalysed reaction is UDP-4-amino-4-deoxy-beta-L-arabinose + (6R)-10-formyltetrahydrofolate = UDP-4-deoxy-4-formamido-beta-L-arabinose + (6S)-5,6,7,8-tetrahydrofolate + H(+). It participates in nucleotide-sugar biosynthesis; UDP-4-deoxy-4-formamido-beta-L-arabinose biosynthesis; UDP-4-deoxy-4-formamido-beta-L-arabinose from UDP-alpha-D-glucuronate: step 1/3. It functions in the pathway nucleotide-sugar biosynthesis; UDP-4-deoxy-4-formamido-beta-L-arabinose biosynthesis; UDP-4-deoxy-4-formamido-beta-L-arabinose from UDP-alpha-D-glucuronate: step 3/3. Its pathway is bacterial outer membrane biogenesis; lipopolysaccharide biosynthesis. Its function is as follows. Bifunctional enzyme that catalyzes the oxidative decarboxylation of UDP-glucuronic acid (UDP-GlcUA) to UDP-4-keto-arabinose (UDP-Ara4O) and the addition of a formyl group to UDP-4-amino-4-deoxy-L-arabinose (UDP-L-Ara4N) to form UDP-L-4-formamido-arabinose (UDP-L-Ara4FN). The modified arabinose is attached to lipid A and is required for resistance to polymyxin and cationic antimicrobial peptides. This is Bifunctional polymyxin resistance protein ArnA from Shigella boydii serotype 4 (strain Sb227).